We begin with the raw amino-acid sequence, 298 residues long: GTPase Era (298 aa).

Residues 8–176 (RCGRIAVIGR…VSDLLALLPE (169 aa)) enclose the Era-type G domain. Positions 16-23 (GRPNVGKS) are G1. Residue 16–23 (GRPNVGKS) participates in GTP binding. The interval 42–46 (QTTRH) is G2. The tract at residues 63 to 66 (DTPG) is G3. GTP-binding positions include 63 to 67 (DTPGL) and 125 to 128 (NKID). Positions 125-128 (NKID) are G4. The tract at residues 155-157 (VSA) is G5. The region spanning 199–283 (VREQVMRQLG…FLETWVRVRK (85 aa)) is the KH type-2 domain.

The protein belongs to the TRAFAC class TrmE-Era-EngA-EngB-Septin-like GTPase superfamily. Era GTPase family. Monomer.

Its subcellular location is the cytoplasm. It localises to the cell inner membrane. An essential GTPase that binds both GDP and GTP, with rapid nucleotide exchange. Plays a role in 16S rRNA processing and 30S ribosomal subunit biogenesis and possibly also in cell cycle regulation and energy metabolism. This Xylella fastidiosa (strain Temecula1 / ATCC 700964) protein is GTPase Era.